Consider the following 637-residue polypeptide: tRNA uridine 5-carboxymethylaminomethyl modification enzyme MnmG (637 aa).

18–23 (GAGHAG) lines the FAD pocket. Position 282 to 296 (282 to 296 (GPRYCPSIEDKIVRF)) interacts with NAD(+).

It belongs to the MnmG family. In terms of assembly, homodimer. Heterotetramer of two MnmE and two MnmG subunits. It depends on FAD as a cofactor.

The protein localises to the cytoplasm. NAD-binding protein involved in the addition of a carboxymethylaminomethyl (cmnm) group at the wobble position (U34) of certain tRNAs, forming tRNA-cmnm(5)s(2)U34. This chain is tRNA uridine 5-carboxymethylaminomethyl modification enzyme MnmG, found in Pediococcus pentosaceus (strain ATCC 25745 / CCUG 21536 / LMG 10740 / 183-1w).